The primary structure comprises 176 residues: MNKDDDKEGLAMFSALIDGIKPITQNKRHFRTPIKTKQEIELKEQQLHANSYFSDTYQPLLPVQGPMRWLEEGVDSLELKRLRRGDYQPDLLLDLHGYRQSEAKLELAALIQACVKQQSLCCCIMHGYGSGILKQQVPMWLVQHPMVKAFHQAPKEWGGDAALLVLIDIGEQPHRR.

Residues 93 to 168 form the Smr domain; sequence LDLHGYRQSE…GDAALLVLID (76 aa).

The protein belongs to the SmrB family. Associates with collided ribosomes, but not with correctly translating polysomes.

Functionally, acts as a ribosome collision sensor. Detects stalled/collided disomes (pairs of ribosomes where the leading ribosome is stalled and a second ribosome has collided with it) and endonucleolytically cleaves mRNA at the 5' boundary of the stalled ribosome. Stalled/collided disomes form a new interface (primarily via the 30S subunits) that binds SmrB. Cleaved mRNA becomes available for tmRNA ligation, leading to ribosomal subunit dissociation and rescue of stalled ribosomes. The sequence is that of Ribosome rescue factor SmrB from Shewanella baltica (strain OS155 / ATCC BAA-1091).